Here is a 479-residue protein sequence, read N- to C-terminus: FAD-dependent monooxygenase sdcF (479 aa).

An FAD-binding PCMH-type domain is found at 40–213 (AQLPPSCFVL…TLFDMEAFST (174 aa)). His79 bears the Pros-8alpha-FAD histidine mark.

This sequence belongs to the oxygen-dependent FAD-linked oxidoreductase family. FAD is required as a cofactor.

It functions in the pathway secondary metabolite biosynthesis. Functionally, FAD-dependent monooxygenase; part of the gene cluster that mediates the biosynthesis of the polyenes aspernidgulenes. The carbon backbone of aspernidgulenes is synthesized by the HR-PKS sdgA, which accepts acetyl-CoA as the starter unit and performs malonyl-CoA extensions as well as regioselective methylation and reduction. The resulting nonaketide offloads the HR-PKS by intramolecular lactonization to yield the 5,6-dihydro-alpha-pyrone-containing hexaenoic acids preaspernidgulene A1 and A2. The FAD-dependent monooxygenase sdgC then installs the first epoxide on the penultimate double bond. Subsequently, the FAD-dependent monooxygenase sdgF presumably generates a ketone intermediate through Meinwald rearrangement involving a hydride shift. Next, sdgC introduces another epoxide on the last olefin of the ketone intermediate after E/Z isomerization. The epoxide hydrolase sdgD then catalyzes stereospecific cyclization of the 5,6-dihydro-alpha-pyrone and opening of the epoxide ring to form an oxygenated trimethylcyclopentanone and an oxabicyclo[2.2.1]heptane unit. Finally, the bicyclic unit undergoes hydrolytic cleavage, either spontaneously or catalyzed by sdgD, to assemble the dimethyl-gamma-lactone moiety in aspernidgulene A1. In Emericella nidulans (strain FGSC A4 / ATCC 38163 / CBS 112.46 / NRRL 194 / M139) (Aspergillus nidulans), this protein is FAD-dependent monooxygenase sdcF.